We begin with the raw amino-acid sequence, 110 residues long: UPF0122 protein BCAH187_A3894 (110 aa).

Belongs to the UPF0122 family.

Functionally, might take part in the signal recognition particle (SRP) pathway. This is inferred from the conservation of its genetic proximity to ftsY/ffh. May be a regulatory protein. The chain is UPF0122 protein BCAH187_A3894 from Bacillus cereus (strain AH187).